Here is a 267-residue protein sequence, read N- to C-terminus: Regulatory protein RecX (267 aa).

This sequence belongs to the RecX family.

The protein resides in the cytoplasm. Its function is as follows. Modulates RecA activity. The protein is Regulatory protein RecX of Staphylococcus haemolyticus (strain JCSC1435).